Consider the following 371-residue polypeptide: Vasopressin V2 receptor (371 aa).

Residues 1-38 (MLLVSTVSAVPGLFSPPSSPSNSSQEELLDDRDPLLVR) are Extracellular-facing. Asn-22 carries N-linked (GlcNAc...) asparagine glycosylation. The helical transmembrane segment at 39 to 63 (AELALLSTIFVAVALSNGLVLGALI) threads the bilayer. The Cytoplasmic portion of the chain corresponds to 64–77 (RRGRRGRWAPMHVF). A helical transmembrane segment spans residues 78 to 98 (ISHLCLADLAVALFQVLPQLA). Residues 99 to 113 (WDATDRFHGPDALCR) are Extracellular-facing. A helical transmembrane segment spans residues 114 to 135 (AVKYLQMVGMYASSYMILAMTL). Topologically, residues 136–159 (DRHRAICRPMLAYRHGGGARWNRP) are cytoplasmic. The chain crosses the membrane as a helical span at residues 160 to 180 (VLVAWAFSLLLSLPQLFIFAQ). Over 181 to 200 (RDVGNGSGVFDCWARFAEPW) the chain is Extracellular. The N-linked (GlcNAc...) asparagine glycan is linked to Asn-185. The helical transmembrane segment at 201–220 (GLRAYVTWIALMVFVAPALG) threads the bilayer. At 221–271 (IAACQVLIFREIHASLVPGPSERAGRRRRGRRTGSPSEGAHVSAAMAKTVR) the chain is on the cytoplasmic side. The disordered stretch occupies residues 240 to 260 (PSERAGRRRRGRRTGSPSEGA). Residues 272–293 (MTLVIVIVYVLCWAPFFLVQLW) traverse the membrane as a helical segment. At 294 to 308 (AAWDPEAPLERPPFV) the chain is on the extracellular side. A helical transmembrane segment spans residues 309–328 (LLMLLASLNSCTNPWIYASF). At 329 to 371 (SSSVSSELRSLLCCAQRHTTHSLGPQDESCATASSSLMKDTPS) the chain is on the cytoplasmic side. 2 S-palmitoyl cysteine lipidation sites follow: Cys-341 and Cys-342. A disordered region spans residues 349-371 (HSLGPQDESCATASSSLMKDTPS). Residues 357 to 371 (SCATASSSLMKDTPS) show a composition bias toward polar residues.

This sequence belongs to the G-protein coupled receptor 1 family. Vasopressin/oxytocin receptor subfamily. In terms of assembly, interacts with ARRDC4. Identified in a complex containing at least ARRDC4, V2R and HGS. Interacts with TMEM147. In terms of tissue distribution, kidney.

The protein localises to the cell membrane. Functionally, receptor for arginine vasopressin. The activity of this receptor is mediated by G proteins which activate adenylate cyclase. Involved in renal water reabsorption. The protein is Vasopressin V2 receptor (Avpr2) of Rattus norvegicus (Rat).